Consider the following 334-residue polypeptide: Ribosomal RNA small subunit methyltransferase H (334 aa).

Residues 54–56 (GGH), Asp74, Phe100, Asp121, and Gln128 contribute to the S-adenosyl-L-methionine site. The interval 272–318 (RHSKGQYPEDENLPMPPKRPRYFSKPKRVGPSKAEISNNPRSRSAWL) is disordered. Positions 289–301 (KRPRYFSKPKRVG) are enriched in basic residues.

This sequence belongs to the methyltransferase superfamily. RsmH family.

It is found in the cytoplasm. The catalysed reaction is cytidine(1402) in 16S rRNA + S-adenosyl-L-methionine = N(4)-methylcytidine(1402) in 16S rRNA + S-adenosyl-L-homocysteine + H(+). Its function is as follows. Specifically methylates the N4 position of cytidine in position 1402 (C1402) of 16S rRNA. The sequence is that of Ribosomal RNA small subunit methyltransferase H from Psychrobacter arcticus (strain DSM 17307 / VKM B-2377 / 273-4).